The following is a 112-amino-acid chain: Tyrosine-protein phosphatase 7 (112 aa).

Residues asparagine 1–valine 112 enclose the Tyrosine-protein phosphatase domain. Aspartate 82 contributes to the substrate binding site.

The protein belongs to the protein-tyrosine phosphatase family.

It carries out the reaction O-phospho-L-tyrosyl-[protein] + H2O = L-tyrosyl-[protein] + phosphate. This chain is Tyrosine-protein phosphatase 7 (STY-7), found in Styela plicata (Wrinkled sea squirt).